Reading from the N-terminus, the 112-residue chain is Protein new-glue 2 (112 aa).

The first 24 residues, 1 to 24 (MKITVVLVLLATFLGCVMIHESEA), serve as a signal peptide directing secretion. The span at 24–69 (ASTTTTSTSASATTTTSASATTTTSASATTTTSASATTTTASPSSS) shows a compositional bias: low complexity. A disordered region spans residues 24-112 (ASTTTTSTSA…RSSRNRRSEE (89 aa)). Repeat copies occupy residues 31-38 (TSASATTT), 39-46 (TSASATTT), 47-54 (TSASATTT), and 55-62 (TSASATTT). Residues 31–62 (TSASATTTTSASATTTTSASATTTTSASATTT) are 4 X 8 AA tandem repeats of T-S-A-S-A-T-T-T. Residues 70–112 (SKKKTVTHYKRKVKRPKKVRKITRRRGLRSRNGRSSRNRRSEE) are compositionally biased toward basic residues.

The protein to NG-1, also to SGS-3. Salivary gland specific.

It is found in the secreted. This chain is Protein new-glue 2 (ng2), found in Drosophila melanogaster (Fruit fly).